The sequence spans 663 residues: Bifunctional polymyxin resistance protein ArnA (663 aa).

Positions 1–307 (MSSKAVVFAY…ELGLVDGSVL (307 aa)) are formyltransferase ArnAFT. Histidine 106 functions as the Proton donor; for formyltransferase activity in the catalytic mechanism. Residues arginine 116 and 138-142 (VKRAD) each bind (6R)-10-formyltetrahydrofolate. A dehydrogenase ArnADH region spans residues 317 to 663 (RRTRVLILGV…EAMLEIADKK (347 aa)). NAD(+) is bound by residues aspartate 350 and 371-372 (DI). UDP-alpha-D-glucuronate is bound by residues alanine 396, tyrosine 401, and 435 to 436 (TS). The active-site Proton acceptor; for decarboxylase activity is glutamate 437. Residues arginine 463, asparagine 494, 528–537 (RLFDGGEQKR), and tyrosine 615 contribute to the UDP-alpha-D-glucuronate site. Residue arginine 621 is the Proton donor; for decarboxylase activity of the active site.

The protein in the N-terminal section; belongs to the Fmt family. UDP-L-Ara4N formyltransferase subfamily. It in the C-terminal section; belongs to the NAD(P)-dependent epimerase/dehydratase family. UDP-glucuronic acid decarboxylase subfamily. Homohexamer, formed by a dimer of trimers.

The catalysed reaction is UDP-alpha-D-glucuronate + NAD(+) = UDP-beta-L-threo-pentopyranos-4-ulose + CO2 + NADH. It catalyses the reaction UDP-4-amino-4-deoxy-beta-L-arabinose + (6R)-10-formyltetrahydrofolate = UDP-4-deoxy-4-formamido-beta-L-arabinose + (6S)-5,6,7,8-tetrahydrofolate + H(+). It functions in the pathway nucleotide-sugar biosynthesis; UDP-4-deoxy-4-formamido-beta-L-arabinose biosynthesis; UDP-4-deoxy-4-formamido-beta-L-arabinose from UDP-alpha-D-glucuronate: step 1/3. It participates in nucleotide-sugar biosynthesis; UDP-4-deoxy-4-formamido-beta-L-arabinose biosynthesis; UDP-4-deoxy-4-formamido-beta-L-arabinose from UDP-alpha-D-glucuronate: step 3/3. Its pathway is bacterial outer membrane biogenesis; lipopolysaccharide biosynthesis. Bifunctional enzyme that catalyzes the oxidative decarboxylation of UDP-glucuronic acid (UDP-GlcUA) to UDP-4-keto-arabinose (UDP-Ara4O) and the addition of a formyl group to UDP-4-amino-4-deoxy-L-arabinose (UDP-L-Ara4N) to form UDP-L-4-formamido-arabinose (UDP-L-Ara4FN). The modified arabinose is attached to lipid A and is required for resistance to polymyxin and cationic antimicrobial peptides. This chain is Bifunctional polymyxin resistance protein ArnA, found in Pseudomonas fluorescens (strain SBW25).